We begin with the raw amino-acid sequence, 64 residues long: KEGYLMDHEGCKLSCFIRPSGYCGRECAIKKGSSGYCAWPACYCYGLPNWVKVWERATNRCGKK.

Residues 1 to 62 (KEGYLMDHEG…VWERATNRCG (62 aa)) form the LCN-type CS-alpha/beta domain. 4 disulfides stabilise this stretch: Cys11-Cys61, Cys15-Cys37, Cys23-Cys42, and Cys27-Cys44. Cys61 is modified (cysteine amide).

It belongs to the long (4 C-C) scorpion toxin superfamily. Sodium channel inhibitor family. Beta subfamily. In terms of tissue distribution, expressed by the venom gland.

The protein localises to the secreted. Beta toxins bind voltage-independently at site-4 of sodium channels (Nav) and shift the voltage of activation toward more negative potentials thereby affecting sodium channel activation and promoting spontaneous and repetitive firing. The chain is Beta-toxin Tf1 from Tityus fasciolatus (Central Brazilian scorpion).